The following is a 345-amino-acid chain: GTPase Obg (345 aa).

Positions 1–159 (MHFLDQAKIF…MWVWLRLKLL (159 aa)) constitute an Obg domain. A disordered region spans residues 121-142 (GDGGRGNASYKTSTNRAPRQHG). Residues 160–327 (ADCGLVGLPN…VLDKIIEILG (168 aa)) form the OBG-type G domain. Residues 166-173 (GLPNAGKS), 191-195 (FTTIR), 212-215 (DIPG), 279-282 (NKID), and 308-310 (SGA) each bind GTP. Positions 173 and 193 each coordinate Mg(2+).

Belongs to the TRAFAC class OBG-HflX-like GTPase superfamily. OBG GTPase family. In terms of assembly, monomer. Requires Mg(2+) as cofactor.

The protein localises to the cytoplasm. Its function is as follows. An essential GTPase which binds GTP, GDP and possibly (p)ppGpp with moderate affinity, with high nucleotide exchange rates and a fairly low GTP hydrolysis rate. Plays a role in control of the cell cycle, stress response, ribosome biogenesis and in those bacteria that undergo differentiation, in morphogenesis control. The chain is GTPase Obg from Rhizorhabdus wittichii (strain DSM 6014 / CCUG 31198 / JCM 15750 / NBRC 105917 / EY 4224 / RW1) (Sphingomonas wittichii).